We begin with the raw amino-acid sequence, 168 residues long: MSRDTSANSSGQQNYTWSERVIQITRVTKVVKGGKKLSFRAIIVIGNNQGSVGVGVGKASDVIGAVKKGVSDCKKQIIEFPLTSSSTISHAVEGRFGAASVILKPSVQGSGVIAGGAMRTVIELSGIKNIVAKQLGTKNHLNNAKATINALSKLNSKSSQLSLMSFSN.

One can recognise an S5 DRBM domain in the interval Trp-17–Phe-80.

It belongs to the universal ribosomal protein uS5 family. As to quaternary structure, part of the 30S ribosomal subunit. Contacts protein S4.

The protein resides in the plastid. It is found in the chloroplast. In terms of biological role, with S4 and S12 plays an important role in translational accuracy. This chain is Small ribosomal subunit protein uS5c (rps5), found in Cyanidium caldarium (Red alga).